A 346-amino-acid polypeptide reads, in one-letter code: Phosphoribosylformylglycinamidine cyclo-ligase (346 aa).

Belongs to the AIR synthase family.

Its subcellular location is the cytoplasm. It carries out the reaction 2-formamido-N(1)-(5-O-phospho-beta-D-ribosyl)acetamidine + ATP = 5-amino-1-(5-phospho-beta-D-ribosyl)imidazole + ADP + phosphate + H(+). The protein operates within purine metabolism; IMP biosynthesis via de novo pathway; 5-amino-1-(5-phospho-D-ribosyl)imidazole from N(2)-formyl-N(1)-(5-phospho-D-ribosyl)glycinamide: step 2/2. This Vibrio atlanticus (strain LGP32) (Vibrio splendidus (strain Mel32)) protein is Phosphoribosylformylglycinamidine cyclo-ligase.